The primary structure comprises 182 residues: AMKMSFELEIGAQAPLGFWDPLGLLADADQERFERLRYVEVKHGRIAMLAIAGHLTQQNARLPGMLSNSANLSFADMPNGVAALSKIPPGGLAQIFGFIGFLELAVMKNVEGSFPGDFTLGGNPFASSWDAMSEETQESKRAIELNNGRAAQMGILALMVHEELNNKPYVINDLLGASYNFN.

The transit peptide at 1-4 (AMKM) directs the protein to the chloroplast. The next 3 membrane-spanning stretches (helical) occupy residues 46-66 (IAML…PGML), 87-107 (IPPG…LAVM), and 148-168 (GRAA…NNKP).

The protein belongs to the fucoxanthin chlorophyll protein family. The LHC complex of chromophytic algae is composed of fucoxanthin, chlorophyll A and C bound non-covalently by fucoxanthin chlorophyll proteins (FCPs). The ratio of pigments in this LHC is; fucoxanthin: chlorophyll C: chlorophyll A; (0.6-1): (0.1-0.3): (1).

It localises to the plastid. The protein resides in the chloroplast thylakoid membrane. Functionally, the light-harvesting complex (LHC) functions as a light receptor, it captures and delivers excitation energy to photosystems with which it is closely associated. Energy is transferred from the carotenoid and chlorophyll C (or B) to chlorophyll A and the photosynthetic reaction centers where it is used to synthesize ATP and reducing power. The protein is Fucoxanthin-chlorophyll a-c binding protein D, chloroplastic (FCPD) of Macrocystis pyrifera (Giant kelp).